The primary structure comprises 98 residues: NADH-ubiquinone oxidoreductase chain 4L (98 aa).

3 consecutive transmembrane segments (helical) span residues 1-21 (MTLI…GLLM), 29-49 (ALLC…LTIL), and 61-81 (IILL…LVMV).

The protein belongs to the complex I subunit 4L family. In terms of assembly, core subunit of respiratory chain NADH dehydrogenase (Complex I) which is composed of 45 different subunits.

The protein resides in the mitochondrion inner membrane. The enzyme catalyses a ubiquinone + NADH + 5 H(+)(in) = a ubiquinol + NAD(+) + 4 H(+)(out). Functionally, core subunit of the mitochondrial membrane respiratory chain NADH dehydrogenase (Complex I) which catalyzes electron transfer from NADH through the respiratory chain, using ubiquinone as an electron acceptor. Part of the enzyme membrane arm which is embedded in the lipid bilayer and involved in proton translocation. This chain is NADH-ubiquinone oxidoreductase chain 4L (MT-ND4L), found in Balaenoptera bonaerensis (Antarctic minke whale).